The following is a 571-amino-acid chain: Chitin-inducible gibberellin-responsive protein 1 (571 aa).

A compositionally biased stretch (polar residues) spans 61–77 (TNTPDNQSSTETISAQP). Disordered stretches follow at residues 61 to 80 (TNTP…PISP) and 151 to 180 (QRSR…YPTA). Residues 192 to 571 (ELREDPQIIV…RKLISASAWH (380 aa)) form the GRAS domain. The segment at 199-259 (IIVKQLLTRC…VARHGNSGTN (61 aa)) is leucine repeat I (LRI). Residues 278–343 (MRILYNICPY…GGPPRVRITG (66 aa)) form a VHIID region. The VHIID motif lies at 309–313 (IHIID). Positions 359–391 (IVGKMLKSMSEEFKIPLEFTPLSVYATQVTKEM) are leucine repeat II (LRII). The tract at residues 400–494 (LSVNFTLQLH…QHCLAKDIVN (95 aa)) is PFYRE. Residues 497-571 (ACEGKDRVER…RKLISASAWH (75 aa)) form an SAW region.

Belongs to the GRAS family.

Its subcellular location is the nucleus. In terms of biological role, may play a regulatory role in the early step of oligosaccharide elicitor response, downstream of the membrane-associated high-affinity chitin-binding protein. In Oryza sativa subsp. japonica (Rice), this protein is Chitin-inducible gibberellin-responsive protein 1 (CIGR1).